Consider the following 105-residue polypeptide: MKVHKGDTVLVIAGKDKGAKGKVLQAYPARNRVLVEGVNRIKKHTAISANQRGAQAGGIVTQEAPIHVSNVMVVDSDGKPTRIGYRVDEETDKRVRISKRNGKDI.

It belongs to the universal ribosomal protein uL24 family. In terms of assembly, part of the 50S ribosomal subunit.

Functionally, one of two assembly initiator proteins, it binds directly to the 5'-end of the 23S rRNA, where it nucleates assembly of the 50S subunit. Its function is as follows. One of the proteins that surrounds the polypeptide exit tunnel on the outside of the subunit. This Mycobacterium leprae (strain Br4923) protein is Large ribosomal subunit protein uL24.